Consider the following 277-residue polypeptide: Large ribosomal subunit protein uL2 (277 aa).

Residues 222–277 are disordered; that stretch reads GVAMNPVDHPHGGGEGRTSGGRHPVTPWGKPTKGKKTRSNKATDKFIMRSRHQRKK.

Belongs to the universal ribosomal protein uL2 family. In terms of assembly, part of the 50S ribosomal subunit. Forms a bridge to the 30S subunit in the 70S ribosome.

In terms of biological role, one of the primary rRNA binding proteins. Required for association of the 30S and 50S subunits to form the 70S ribosome, for tRNA binding and peptide bond formation. It has been suggested to have peptidyltransferase activity; this is somewhat controversial. Makes several contacts with the 16S rRNA in the 70S ribosome. In Brucella canis (strain ATCC 23365 / NCTC 10854 / RM-666), this protein is Large ribosomal subunit protein uL2.